The following is a 316-amino-acid chain: Ubiquinol oxidase, mitochondrial (316 aa).

The transit peptide at 1-26 (MGVRAQPLLARSLITTTQPWILSARS) directs the protein to the mitochondrion. Residues 124–144 (VHRAVVLETVAAVPGMVAGML) form a helical membrane-spanning segment. Fe cation contacts are provided by Glu131, Glu170, and His173. A helical transmembrane segment spans residues 189-209 (MLVALVQTLFFNVYFLAYMLF). Glu221, Glu272, and His275 together coordinate Fe cation.

Belongs to the alternative oxidase family. Requires Fe cation as cofactor.

The protein resides in the mitochondrion inner membrane. It carries out the reaction 2 a ubiquinol + O2 = 2 a ubiquinone + 2 H2O. Alternative oxidase which function may be to reoxidize reducing equivalents produced by glycolysis such as ubiquinol. The polypeptide is Ubiquinol oxidase, mitochondrial (AOX) (Batrachochytrium dendrobatidis (strain JAM81 / FGSC 10211) (Frog chytrid fungus)).